Here is a 293-residue protein sequence, read N- to C-terminus: Acetylglutamate kinase (293 aa).

Residues 68–69 (GG), Arg-90, and Asn-189 each bind substrate.

This sequence belongs to the acetylglutamate kinase family. ArgB subfamily.

It localises to the cytoplasm. The enzyme catalyses N-acetyl-L-glutamate + ATP = N-acetyl-L-glutamyl 5-phosphate + ADP. It participates in amino-acid biosynthesis; L-arginine biosynthesis; N(2)-acetyl-L-ornithine from L-glutamate: step 2/4. Catalyzes the ATP-dependent phosphorylation of N-acetyl-L-glutamate. In Mycobacterium marinum (strain ATCC BAA-535 / M), this protein is Acetylglutamate kinase.